A 344-amino-acid chain; its full sequence is tRNA(Ile)-lysidine synthase (344 aa).

Position 43-48 (43-48) interacts with ATP; that stretch reads SGGADS.

Belongs to the tRNA(Ile)-lysidine synthase family.

It localises to the cytoplasm. It carries out the reaction cytidine(34) in tRNA(Ile2) + L-lysine + ATP = lysidine(34) in tRNA(Ile2) + AMP + diphosphate + H(+). Functionally, ligates lysine onto the cytidine present at position 34 of the AUA codon-specific tRNA(Ile) that contains the anticodon CAU, in an ATP-dependent manner. Cytidine is converted to lysidine, thus changing the amino acid specificity of the tRNA from methionine to isoleucine. In Bordetella bronchiseptica (strain ATCC BAA-588 / NCTC 13252 / RB50) (Alcaligenes bronchisepticus), this protein is tRNA(Ile)-lysidine synthase.